Here is a 294-residue protein sequence, read N- to C-terminus: UDP-3-O-acyl-N-acetylglucosamine deacetylase (294 aa).

Histidine 75, histidine 232, and aspartate 236 together coordinate Zn(2+). The active-site Proton donor is histidine 259.

It belongs to the LpxC family. It depends on Zn(2+) as a cofactor.

It carries out the reaction a UDP-3-O-[(3R)-3-hydroxyacyl]-N-acetyl-alpha-D-glucosamine + H2O = a UDP-3-O-[(3R)-3-hydroxyacyl]-alpha-D-glucosamine + acetate. It participates in glycolipid biosynthesis; lipid IV(A) biosynthesis; lipid IV(A) from (3R)-3-hydroxytetradecanoyl-[acyl-carrier-protein] and UDP-N-acetyl-alpha-D-glucosamine: step 2/6. In terms of biological role, catalyzes the hydrolysis of UDP-3-O-myristoyl-N-acetylglucosamine to form UDP-3-O-myristoylglucosamine and acetate, the committed step in lipid A biosynthesis. The chain is UDP-3-O-acyl-N-acetylglucosamine deacetylase from Campylobacter concisus (strain 13826).